Consider the following 492-residue polypeptide: Fumarate hydratase 1, mitochondrial (492 aa).

Residues 1–28 (MSIYVASRRLSGGTTVTALRYATSLRSY) constitute a mitochondrion transit peptide. Substrate contacts are provided by residues 127–129 (SGT), 157–160 (HPND), 167–169 (SSN), and Thr-215. The Proton donor/acceptor role is filled by His-216. Ser-346 is an active-site residue. Substrate is bound by residues Ser-347 and 352–354 (KVN).

Belongs to the class-II fumarase/aspartase family. Fumarase subfamily. As to quaternary structure, homotetramer.

It is found in the mitochondrion. It catalyses the reaction (S)-malate = fumarate + H2O. Its pathway is carbohydrate metabolism; tricarboxylic acid cycle; (S)-malate from fumarate: step 1/1. Fumarate hydratase activity (fumarate to L-malate) is strongly inhibited by phosphoenolpyruvate, citrate, oxaloacetate, ATP and ADP. Malate dehydratase activity (malate to fumarate) is activated by oxaloacetate, pyruvate, Asn and Gln. Malate dehydratase activity (malate to fumarate) is inhibited by citrate, succinate, ADP, ATP, glucose-6P and phosphoenolpyruvate. Its function is as follows. Catalyzes the reversible stereospecific interconversion of fumarate to L-malate. Catalyzes the hydration of fumarate to L-malate in the tricarboxylic acid (TCA) cycle to facilitate a transition step in the production of energy in the form of NADH. This is Fumarate hydratase 1, mitochondrial from Arabidopsis thaliana (Mouse-ear cress).